Here is a 356-residue protein sequence, read N- to C-terminus: Protein pelota homolog (356 aa).

It belongs to the eukaryotic release factor 1 family. Pelota subfamily. Monomer. It depends on a divalent metal cation as a cofactor.

The protein resides in the cytoplasm. In terms of biological role, may function in recognizing stalled ribosomes, interact with stem-loop structures in stalled mRNA molecules, and effect endonucleolytic cleavage of the mRNA. May play a role in the release non-functional ribosomes and degradation of damaged mRNAs. Has endoribonuclease activity. This Pyrococcus horikoshii (strain ATCC 700860 / DSM 12428 / JCM 9974 / NBRC 100139 / OT-3) protein is Protein pelota homolog.